Consider the following 224-residue polypeptide: Germin-like protein 8-5 (224 aa).

A signal peptide spans 1–22 (MASPSSLCLLAALALISWQAMA). Cys32 and Cys47 form a disulfide bridge. One can recognise a Cupin type-1 domain in the interval 62–212 (AKLDTPRKTN…AFQVEKGTID (151 aa)). N-linked (GlcNAc...) asparagine glycosylation is present at Asn76. Residues His109, His111, and Glu116 each coordinate Mn(2+). An N-linked (GlcNAc...) asparagine glycan is attached at Asn135. His157 contacts Mn(2+).

The protein belongs to the germin family. As to quaternary structure, oligomer (believed to be a pentamer but probably hexamer).

The protein localises to the secreted. It is found in the extracellular space. Its subcellular location is the apoplast. Plays a role in broad-spectrum disease resistance. Probably has no oxalate oxidase activity even if the active site is conserved. The sequence is that of Germin-like protein 8-5 from Oryza sativa subsp. japonica (Rice).